The primary structure comprises 185 residues: Elongation factor P 1 (185 aa).

It belongs to the elongation factor P family.

Its subcellular location is the cytoplasm. It participates in protein biosynthesis; polypeptide chain elongation. Functionally, involved in peptide bond synthesis. Stimulates efficient translation and peptide-bond synthesis on native or reconstituted 70S ribosomes in vitro. Probably functions indirectly by altering the affinity of the ribosome for aminoacyl-tRNA, thus increasing their reactivity as acceptors for peptidyl transferase. In Chlamydia muridarum (strain MoPn / Nigg), this protein is Elongation factor P 1 (efp1).